A 213-amino-acid polypeptide reads, in one-letter code: Heterochromatin protein 1 (213 aa).

2 disordered regions span residues 1 to 24 (MGKK…EEEY) and 74 to 151 (RKDE…TGFD). The region spanning 24-82 (YAVEKILDRRVRKGKVEYYLKWKGYAETENTWEPEGNLDCQDLIQQYELSRKDEANAAA) is the Chromo 1 domain. Residues 89–104 (SKKERPGSSTKVKETG) show a composition bias toward basic and acidic residues. Residues 105–115 (RTSTTASNSSG) show a composition bias toward polar residues. The Chromo 2 domain occupies 154-212 (LEAEKILGASDNNGRLTFLIQFKGVDQAEMVPSTVANVKIPQMVIRFYEERLSWYSDNE).

It is found in the nucleus. Structural component of heterochromatin, involved in gene repression and the modification of position-effect-variegation. Recognizes and binds histone H3 tails methylated at 'Lys-9', leading to epigenetic repression. This is Heterochromatin protein 1 (HP1A) from Drosophila virilis (Fruit fly).